We begin with the raw amino-acid sequence, 449 residues long: Mycosin-1 (449 aa).

The first 23 residues, 1-23 (MQRVAVMVLAVLLALFSAPPAWA), serve as a signal peptide directing secretion. Cysteine 51 and cysteine 120 are joined by a disulfide. A Peptidase S8 domain is found at 66–389 (PWANDYLRIQ…AGVIDPVAAL (324 aa)). Catalysis depends on charge relay system residues aspartate 92 and histidine 123. 2 disordered regions span residues 160–179 (FQPK…QTAG) and 240–259 (TGQD…SDPR). Residues 170–179 (NDPNTTQTAG) show a composition bias toward polar residues. A disulfide bridge connects residues cysteine 206 and cysteine 244. Serine 334 acts as the Charge relay system in catalysis. Residues 421–441 (ITAVVIAGATLAFALGIGALA) form a helical membrane-spanning segment.

It belongs to the peptidase S8 family.

It is found in the cell membrane. In terms of biological role, may play a dual role in regulation of ESX-1 secretion and virulence. Acts as a protease that cleaves EspB. In Mycolicibacterium smegmatis (strain ATCC 700084 / mc(2)155) (Mycobacterium smegmatis), this protein is Mycosin-1.